A 257-amino-acid polypeptide reads, in one-letter code: Alcohol dehydrogenase 1 (257 aa).

9–33 provides a ligand contact to NAD(+); that stretch reads VFVGGLGFIGYEACKTLITRDLASL. S137 lines the substrate pocket. Y150 (proton acceptor) is an active-site residue.

The protein belongs to the short-chain dehydrogenases/reductases (SDR) family. As to quaternary structure, homodimer.

The enzyme catalyses a primary alcohol + NAD(+) = an aldehyde + NADH + H(+). It catalyses the reaction a secondary alcohol + NAD(+) = a ketone + NADH + H(+). The protein is Alcohol dehydrogenase 1 (ADH1) of Ceratitis cosyra (Mango fruit fly).